The following is a 721-amino-acid chain: BRCA1-A complex subunit RAP80 (721 aa).

The disordered stretch occupies residues 1-65; the sequence is MPRRKKKGKE…GLQKTKIKQS (65 aa). A necessary for transcriptional repression region spans residues 1–101; sequence MPRRKKKGKE…SEQEAREVNS (101 aa). Residue Lys20 forms a Glycyl lysine isopeptide (Lys-Gly) (interchain with G-Cter in SUMO2) linkage. The residue at position 29 (Ser29) is a Phosphoserine. Residue Lys31 forms a Glycyl lysine isopeptide (Lys-Gly) (interchain with G-Cter in SUMO2) linkage. Residues Ser44 and Ser46 each carry the phosphoserine modification. The LR motif motif lies at 60–78; sequence TKIKQSSRAKCLAKRKIAQ. Glycyl lysine isopeptide (Lys-Gly) (interchain with G-Cter in SUMO2) cross-links involve residues Lys75 and Lys90. A UIM 1 domain is found at 80-99; sequence TEEEQFALALKMSEQEAREV. A disordered region spans residues 93–204; the sequence is EQEAREVNSQ…SVSSGSWDQS (112 aa). Residues 97–103 form a UIM-linker region; it reads REVNSQE. A necessary for interaction with NR6A1 N-terminus region spans residues 100–200; sequence NSQEEEEEEL…EEPVSVSSGS (101 aa). The residue at position 101 (Ser101) is a Phosphoserine. One can recognise a UIM 2 domain in the interval 105 to 124; it reads EEEELLRKAIAESLNSCRPS. Residues 117 to 130 show a composition bias toward polar residues; sequence SLNSCRPSDASATR. At Ser140 the chain carries Phosphoserine. Residues 194 to 204 are compositionally biased toward low complexity; the sequence is VSVSSGSWDQS. Ser205 carries the post-translational modification Phosphoserine. Lys245 is covalently cross-linked (Glycyl lysine isopeptide (Lys-Gly) (interchain with G-Cter in SUMO2)). The tract at residues 270 to 400 is AIR; sequence TGGTVNYFWG…EEEPTTSHGQ (131 aa). The interval 334–369 is disordered; that stretch reads NECGQGEQASEKNEGISEDMGDEDKEERQESRASVW. A compositionally biased stretch (acidic residues) spans 349-358; the sequence is ISEDMGDEDK. Residues Lys382 and Lys387 each participate in a glycyl lysine isopeptide (Lys-Gly) (interchain with G-Cter in SUMO2) cross-link. A disordered region spans residues 391–418; that stretch reads EEEPTTSHGQSSQGLFVEETSEEGNSVP. Positions 400–500 are necessary for interaction with NR6A1 C-terminus; that stretch reads QSSQGLFVEE…EIHTSTFSSS (101 aa). Phosphoserine occurs at positions 402 and 420. Residue Lys429 forms a Glycyl lysine isopeptide (Lys-Gly) (interchain with G-Cter in SUMO2) linkage. Ser467 carries the post-translational modification Phosphoserine. The UBZ4-type zinc finger occupies 502–529; sequence QVSCPLCDQGFPPTKIERHAMYCNGLMG. Zn(2+) contacts are provided by Cys505, Cys508, His520, and Cys524. The zinc-finger-like region stretch occupies residues 505 to 582; sequence CPLCDQGFPP…REYQCHVESC (78 aa). Glycyl lysine isopeptide (Lys-Gly) (interchain with G-Cter in SUMO2) cross-links involve residues Lys544, Lys559, Lys562, and Lys607. Residue Ser627 is modified to Phosphoserine. Residues Lys635 and Lys642 each participate in a glycyl lysine isopeptide (Lys-Gly) (interchain with G-Cter in SUMO2) cross-link. Phosphoserine is present on residues Ser655 and Ser679. Glycyl lysine isopeptide (Lys-Gly) (interchain with G-Cter in SUMO2) cross-links involve residues Lys698 and Lys699.

The protein belongs to the RAP80 family. As to quaternary structure, component of the ARISC complex, at least composed of UIMC1/RAP80, ABRAXAS1, BRCC3/BRCC36, BABAM2 and BABAM1/NBA1. Component of the BRCA1-A complex, at least composed of the BRCA1, BARD1, UIMC1/RAP80, ABRAXAS1, BRCC3/BRCC36, BABAM2 and BABAM1/NBA1. In the BRCA1-A complex, interacts directly with ABRAXAS1. Interacts with UBE2I. Interacts with NR6A1. Interacts with ESR1. Interacts with TSP57. Interacts with TRAIP. Sumoylated. Post-translationally, phosphorylated upon DNA damage by ATM or ATR.

The protein resides in the nucleus. In terms of biological role, ubiquitin-binding protein. Specifically recognizes and binds 'Lys-63'-linked ubiquitin. Plays a central role in the BRCA1-A complex by specifically binding 'Lys-63'-linked ubiquitinated histones H2A and H2AX at DNA lesions sites, leading to target the BRCA1-BARD1 heterodimer to sites of DNA damage at double-strand breaks (DSBs). The BRCA1-A complex also possesses deubiquitinase activity that specifically removes 'Lys-63'-linked ubiquitin on histones H2A and H2AX. Also weakly binds monoubiquitin but with much less affinity than 'Lys-63'-linked ubiquitin. May interact with monoubiquitinated histones H2A and H2B; the relevance of such results is however unclear in vivo. Does not bind Lys-48'-linked ubiquitin. May indirectly act as a transcriptional repressor by inhibiting the interaction of NR6A1 with the corepressor NCOR1. The polypeptide is BRCA1-A complex subunit RAP80 (UIMC1) (Sus scrofa (Pig)).